The chain runs to 447 residues: GTPase Der (447 aa).

2 consecutive EngA-type G domains span residues 3–167 (PVIA…ALPE) and 180–353 (IRLA…KSAN). GTP-binding positions include 9–16 (GRPNVGKS), 56–60 (DTGGF), 119–122 (NKAE), 186–193 (GRPNVGKS), 233–237 (DTAGL), and 298–301 (NKWD). The region spanning 354 to 438 (RKMPTPVLTR…PLRIEMKTSS (85 aa)) is the KH-like domain.

This sequence belongs to the TRAFAC class TrmE-Era-EngA-EngB-Septin-like GTPase superfamily. EngA (Der) GTPase family. Associates with the 50S ribosomal subunit.

GTPase that plays an essential role in the late steps of ribosome biogenesis. In Acidovorax ebreus (strain TPSY) (Diaphorobacter sp. (strain TPSY)), this protein is GTPase Der.